A 349-amino-acid polypeptide reads, in one-letter code: Hydroxymethylglutaryl-CoA synthase (349 aa).

The (3S)-3-hydroxy-3-methylglutaryl-CoA site is built by Asp-29 and Ala-30. Glu-81 (proton donor/acceptor) is an active-site residue. (3S)-3-hydroxy-3-methylglutaryl-CoA is bound by residues Cys-113 and Thr-154. Catalysis depends on Cys-113, which acts as the Acyl-thioester intermediate. Arg-202 lines the CoA pocket. The (3S)-3-hydroxy-3-methylglutaryl-CoA site is built by Thr-204 and His-237. The active-site Proton donor/acceptor is the His-237. CoA is bound at residue Lys-242. Positions 246, 269, and 299 each coordinate (3S)-3-hydroxy-3-methylglutaryl-CoA.

Belongs to the thiolase-like superfamily. Archaeal HMG-CoA synthase family. Interacts with acetoacetyl-CoA thiolase that catalyzes the precedent step in the pathway and with a DUF35 protein. The acetoacetyl-CoA thiolase/HMG-CoA synthase complex channels the intermediate via a fused CoA-binding site, which allows for efficient coupling of the endergonic thiolase reaction with the exergonic HMGCS reaction.

It catalyses the reaction acetoacetyl-CoA + acetyl-CoA + H2O = (3S)-3-hydroxy-3-methylglutaryl-CoA + CoA + H(+). It functions in the pathway metabolic intermediate biosynthesis; (R)-mevalonate biosynthesis; (R)-mevalonate from acetyl-CoA: step 2/3. Functionally, catalyzes the condensation of acetyl-CoA with acetoacetyl-CoA to form 3-hydroxy-3-methylglutaryl-CoA (HMG-CoA). Functions in the mevalonate (MVA) pathway leading to isopentenyl diphosphate (IPP), a key precursor for the biosynthesis of isoprenoid compounds that are building blocks of archaeal membrane lipids. In Methanococcoides burtonii (strain DSM 6242 / NBRC 107633 / OCM 468 / ACE-M), this protein is Hydroxymethylglutaryl-CoA synthase.